Consider the following 227-residue polypeptide: Peptidyl-tRNA hydrolase (227 aa).

A tRNA-binding site is contributed by tyrosine 14. The active-site Proton acceptor is histidine 19. TRNA-binding residues include phenylalanine 64, asparagine 66, and asparagine 112. Residues 182-227 (RIALLTQPPKPPKPPKPPKDGAKETAGKGTEAETAKPPGPAAGRTG) are disordered. Residues 198-215 (PPKDGAKETAGKGTEAET) show a composition bias toward basic and acidic residues.

It belongs to the PTH family. Monomer.

It is found in the cytoplasm. The enzyme catalyses an N-acyl-L-alpha-aminoacyl-tRNA + H2O = an N-acyl-L-amino acid + a tRNA + H(+). Hydrolyzes ribosome-free peptidyl-tRNAs (with 1 or more amino acids incorporated), which drop off the ribosome during protein synthesis, or as a result of ribosome stalling. Functionally, catalyzes the release of premature peptidyl moieties from peptidyl-tRNA molecules trapped in stalled 50S ribosomal subunits, and thus maintains levels of free tRNAs and 50S ribosomes. This Rhodospirillum centenum (strain ATCC 51521 / SW) protein is Peptidyl-tRNA hydrolase.